Reading from the N-terminus, the 271-residue chain is Putative pirin-like protein At3g59260 (271 aa).

Belongs to the pirin family.

It is found in the nucleus. The protein is Putative pirin-like protein At3g59260 of Arabidopsis thaliana (Mouse-ear cress).